A 149-amino-acid polypeptide reads, in one-letter code: SsrA-binding protein (149 aa).

It belongs to the SmpB family.

Its subcellular location is the cytoplasm. Required for rescue of stalled ribosomes mediated by trans-translation. Binds to transfer-messenger RNA (tmRNA), required for stable association of tmRNA with ribosomes. tmRNA and SmpB together mimic tRNA shape, replacing the anticodon stem-loop with SmpB. tmRNA is encoded by the ssrA gene; the 2 termini fold to resemble tRNA(Ala) and it encodes a 'tag peptide', a short internal open reading frame. During trans-translation Ala-aminoacylated tmRNA acts like a tRNA, entering the A-site of stalled ribosomes, displacing the stalled mRNA. The ribosome then switches to translate the ORF on the tmRNA; the nascent peptide is terminated with the 'tag peptide' encoded by the tmRNA and targeted for degradation. The ribosome is freed to recommence translation, which seems to be the essential function of trans-translation. The polypeptide is SsrA-binding protein (Acholeplasma laidlawii (strain PG-8A)).